Here is a 155-residue protein sequence, read N- to C-terminus: 17.6 kDa class II heat shock protein (155 aa).

Positions 38–155 constitute a sHSP domain; the sequence is DAKAMAATPA…KPKTIQVQVA (118 aa).

It belongs to the small heat shock protein (HSP20) family. As to quaternary structure, may form oligomeric structures.

The protein localises to the cytoplasm. In Arabidopsis thaliana (Mouse-ear cress), this protein is 17.6 kDa class II heat shock protein (HSP17.6).